The chain runs to 686 residues: Cadmium, zinc and cobalt-transporting ATPase (686 aa).

The region spanning 1 to 62 (MQEYHIHNLD…FIKQNEPHLS (62 aa)) is the HMA domain. Residues 1 to 72 (MQEYHIHNLD…LSFKEATEKP (72 aa)) are Cytoplasmic-facing. Cd(2+) is bound by residues Cys11 and Cys14. The Co(2+) site is built by Cys11 and Cys14. Residues Cys11 and Cys14 each contribute to the Zn(2+) site. A helical membrane pass occupies residues 73-92 (LSFTPLIITIMVFLGAILIL). Residues 93–102 (HLNPSPLIEK) are Extracellular-facing. Residues 103-124 (AMFFVLALVYLVSGKDVILGAF) traverse the membrane as a helical segment. Topologically, residues 125–131 (RGLRKGQ) are cytoplasmic. Residues 132-151 (FFDENALMLIATIAAFFVGA) form a helical membrane-spanning segment. Residues 152–154 (YEE) lie on the Extracellular side of the membrane. A helical membrane pass occupies residues 155–174 (SVSIMVFYSAGEFLQKLAVS). Over 175–308 (RSKKSLKALV…ITKFSRYYTP (134 aa)) the chain is Cytoplasmic. Residues 309-327 (SVLFIALMIAVLPPLFSMG) form a helical membrane-spanning segment. The Extracellular portion of the chain corresponds to 328–332 (SFDEW). The helical transmembrane segment at 333–350 (IYRGLVALMVSCPCALVI) threads the bilayer. The Cytoplasmic portion of the chain corresponds to 351–635 (SVPLGYFGGV…VLAIAKKTKS (285 aa)). The active-site 4-aspartylphosphate intermediate is Asp388. Mg(2+) is bound by residues Asp583 and Asp587. The chain crosses the membrane as a helical span at residues 636–657 (IIWQNILFALGIKAVFIVLGLM). Residues 658-665 (GVASLWEA) are Extracellular-facing. Residues 666–681 (VFGDVGVTLLALANSM) form a helical membrane-spanning segment. Residues 682 to 686 (RAMRA) lie on the Cytoplasmic side of the membrane.

This sequence belongs to the cation transport ATPase (P-type) (TC 3.A.3) family. Type IB subfamily.

Its subcellular location is the cell membrane. The enzyme catalyses Zn(2+)(in) + ATP + H2O = Zn(2+)(out) + ADP + phosphate + H(+). It carries out the reaction Cd(2+)(in) + ATP + H2O = Cd(2+)(out) + ADP + phosphate + H(+). In terms of biological role, couples the hydrolysis of ATP with the transport of cadmium, zinc and cobalt out of the cell. This ion efflux may influence the activity of urease, which is essential for the survival of the bacterium in the gastric environment. The polypeptide is Cadmium, zinc and cobalt-transporting ATPase (cadA) (Helicobacter pylori (strain ATCC 700392 / 26695) (Campylobacter pylori)).